The primary structure comprises 142 residues: Large ribosomal subunit protein uL13 (142 aa).

The protein belongs to the universal ribosomal protein uL13 family. Part of the 50S ribosomal subunit.

Its function is as follows. This protein is one of the early assembly proteins of the 50S ribosomal subunit, although it is not seen to bind rRNA by itself. It is important during the early stages of 50S assembly. The sequence is that of Large ribosomal subunit protein uL13 from Psychromonas ingrahamii (strain DSM 17664 / CCUG 51855 / 37).